The primary structure comprises 92 residues: Small ribosomal subunit protein uS19 (92 aa).

The protein belongs to the universal ribosomal protein uS19 family.

Its function is as follows. Protein S19 forms a complex with S13 that binds strongly to the 16S ribosomal RNA. The protein is Small ribosomal subunit protein uS19 of Nitrobacter hamburgensis (strain DSM 10229 / NCIMB 13809 / X14).